We begin with the raw amino-acid sequence, 560 residues long: Nibrin homolog (560 aa).

The FHA domain occupies 25–87 (YKVGRKDCDV…YGTFFNKVQG (63 aa)). The BRCT domain maps to 115-190 (TFRLSFVPIV…KQIVLGDWFK (76 aa)).

The protein belongs to the Nibrin family. In terms of assembly, component of the MRN complex composed of two heterodimers RAD50 and MRE11 associated with a single NBS1. Mostly expressed in the shoot apex and young flower, but also in young leaves, root tips and stamen, tissues where frequent cell division or meiosis may occur.

It localises to the nucleus. Its subcellular location is the chromosome. Functionally, component of the MRN complex, which plays a central role in double-strand break (DSB) repair, DNA recombination, maintenance of telomere integrity and meiosis. The MRN complex is involved in the repair of DNA double-strand breaks (DSBs) via homologous recombination (HR), an error-free mechanism which primarily occurs during S and G2 phases. The complex (1) mediates the end resection of damaged DNA, which generates proper single-stranded DNA, a key initial steps in HR, and is (2) required for the recruitment of other repair factors and efficient activation of ATM and ATR upon DNA damage. The MRN complex possesses single-strand endonuclease activity and double-strand-specific 3'-5' exonuclease activity, which are provided by MRE11, to initiate end resection, which is required for single-strand invasion and recombination. Within the MRN complex, NBS1 acts as a protein-protein adapter, which specifically recognizes and binds phosphorylated proteins, promoting their recruitment to DNA damage sites. Recruits MRE11 and RAD50 components of the MRN complex to DSBs in response to DNA damage. The chain is Nibrin homolog from Oryza sativa subsp. japonica (Rice).